The primary structure comprises 181 residues: Mediator of RNA polymerase II transcription subunit 19 (181 aa).

The disordered stretch occupies residues 120–181; sequence GMPGPGKPGI…TDGERRRKRK (62 aa). Residues 122–133 are compositionally biased toward gly residues; it reads PGPGKPGIGPQV. A compositionally biased stretch (polar residues) spans 143–158; the sequence is RSYNTESARESSNNEE.

It belongs to the Mediator complex subunit 19 family. In terms of assembly, component of the Mediator complex.

It localises to the nucleus. Functionally, component of the Mediator complex, a coactivator involved in the regulated transcription of nearly all RNA polymerase II-dependent genes. Mediator functions as a bridge to convey information from gene-specific regulatory proteins to the basal RNA polymerase II transcription machinery. Mediator is recruited to promoters by direct interactions with regulatory proteins and serves as a scaffold for the assembly of a functional preinitiation complex with RNA polymerase II and the general transcription factors. In Yarrowia lipolytica (strain CLIB 122 / E 150) (Yeast), this protein is Mediator of RNA polymerase II transcription subunit 19 (ROX3).